We begin with the raw amino-acid sequence, 262 residues long: 3-deoxy-manno-octulosonate cytidylyltransferase (262 aa).

It belongs to the KdsB family.

It is found in the cytoplasm. It carries out the reaction 3-deoxy-alpha-D-manno-oct-2-ulosonate + CTP = CMP-3-deoxy-beta-D-manno-octulosonate + diphosphate. It participates in nucleotide-sugar biosynthesis; CMP-3-deoxy-D-manno-octulosonate biosynthesis; CMP-3-deoxy-D-manno-octulosonate from 3-deoxy-D-manno-octulosonate and CTP: step 1/1. Its pathway is bacterial outer membrane biogenesis; lipopolysaccharide biosynthesis. In terms of biological role, activates KDO (a required 8-carbon sugar) for incorporation into bacterial lipopolysaccharide in Gram-negative bacteria. This chain is 3-deoxy-manno-octulosonate cytidylyltransferase, found in Koribacter versatilis (strain Ellin345).